A 351-amino-acid chain; its full sequence is UDP-3-O-acylglucosamine N-acyltransferase (351 aa).

His-257 functions as the Proton acceptor in the catalytic mechanism.

Belongs to the transferase hexapeptide repeat family. LpxD subfamily. As to quaternary structure, homotrimer.

The enzyme catalyses a UDP-3-O-[(3R)-3-hydroxyacyl]-alpha-D-glucosamine + a (3R)-hydroxyacyl-[ACP] = a UDP-2-N,3-O-bis[(3R)-3-hydroxyacyl]-alpha-D-glucosamine + holo-[ACP] + H(+). It participates in bacterial outer membrane biogenesis; LPS lipid A biosynthesis. Functionally, catalyzes the N-acylation of UDP-3-O-acylglucosamine using 3-hydroxyacyl-ACP as the acyl donor. Is involved in the biosynthesis of lipid A, a phosphorylated glycolipid that anchors the lipopolysaccharide to the outer membrane of the cell. The sequence is that of UDP-3-O-acylglucosamine N-acyltransferase from Methylorubrum extorquens (strain PA1) (Methylobacterium extorquens).